A 1026-amino-acid polypeptide reads, in one-letter code: Multidrug resistance protein MdtC (1026 aa).

Helical transmembrane passes span I15 to A35, E333 to L353, L360 to C380, L387 to L407, V431 to L451, F463 to P483, L528 to P548, L853 to S873, L897 to V917, P953 to G973, and I984 to V1004.

This sequence belongs to the resistance-nodulation-cell division (RND) (TC 2.A.6) family. MdtC subfamily. In terms of assembly, part of a tripartite efflux system composed of MdtA, MdtB and MdtC. MdtC forms a heteromultimer with MdtB.

The protein resides in the cell inner membrane. The chain is Multidrug resistance protein MdtC from Salmonella paratyphi B (strain ATCC BAA-1250 / SPB7).